The primary structure comprises 301 residues: Probable alpha-L-glutamate ligase (301 aa).

An ATP-grasp domain is found at 104 to 287 (LQLMSRKGLG…VASMIIKHIE (184 aa)). ATP-binding positions include Lys141, 178 to 179 (EY), Asp187, and 211 to 213 (RSN). Positions 248, 260, and 262 each coordinate Mg(2+). Asp248, Glu260, and Asn262 together coordinate Mn(2+).

The protein belongs to the RimK family. Mg(2+) serves as cofactor. It depends on Mn(2+) as a cofactor.

This Marinomonas sp. (strain MWYL1) protein is Probable alpha-L-glutamate ligase.